The chain runs to 296 residues: Urease accessory protein UreD (296 aa).

This sequence belongs to the UreD family. As to quaternary structure, ureD, UreF and UreG form a complex that acts as a GTP-hydrolysis-dependent molecular chaperone, activating the urease apoprotein by helping to assemble the nickel containing metallocenter of UreC. The UreE protein probably delivers the nickel.

It is found in the cytoplasm. Its function is as follows. Required for maturation of urease via the functional incorporation of the urease nickel metallocenter. This Nitrosococcus oceani (strain ATCC 19707 / BCRC 17464 / JCM 30415 / NCIMB 11848 / C-107) protein is Urease accessory protein UreD.